A 50-amino-acid chain; its full sequence is Ornatin-E (50 aa).

A Cell attachment site motif is present at residues 42 to 44 (RGD).

It belongs to the ornatin family.

The protein resides in the secreted. In terms of biological role, potent inhibitor of fibrinogen interaction with platelet receptors expressed on glycoprotein IIb-IIIa complex. May prevent blood from clotting during either feeding and/or storage of ingested blood. The polypeptide is Ornatin-E (Placobdella ornata (Turtle leech)).